Consider the following 138-residue polypeptide: Ribosomal RNA large subunit methyltransferase H (138 aa).

Residues Leu57, Gly86, and 105–110 (LSPLTF) each bind S-adenosyl-L-methionine.

This sequence belongs to the RNA methyltransferase RlmH family. As to quaternary structure, homodimer.

It is found in the cytoplasm. The enzyme catalyses pseudouridine(1915) in 23S rRNA + S-adenosyl-L-methionine = N(3)-methylpseudouridine(1915) in 23S rRNA + S-adenosyl-L-homocysteine + H(+). In terms of biological role, specifically methylates the pseudouridine at position 1915 (m3Psi1915) in 23S rRNA. This chain is Ribosomal RNA large subunit methyltransferase H, found in Prochlorococcus marinus (strain MIT 9301).